The sequence spans 718 residues: Sodium/myo-inositol cotransporter (718 aa).

Topologically, residues 1–9 are extracellular; sequence MRAVLDTAD. The helical transmembrane segment at 10–29 threads the bilayer; sequence IAIVALYFILVMCIGFFAMW. Topologically, residues 30–38 are cytoplasmic; sequence KSNRSTVSG. The helical transmembrane segment at 39 to 57 threads the bilayer; it reads YFLAGRSMTWVAIGASLFV. Topologically, residues 58–86 are extracellular; sequence SNIGSEHFIGLAGSGAASGFAVGAWEFNA. Residues 87 to 110 form a helical membrane-spanning segment; the sequence is LLLLQLLGWVFIPIYIRSGVYTMP. The Cytoplasmic portion of the chain corresponds to 111-123; the sequence is EYLSKRFGGHRIQ. The helical transmembrane segment at 124 to 144 threads the bilayer; the sequence is VYFAALSLILYIFTKLSVDLY. Residues 145 to 157 are Extracellular-facing; it reads SGALFIQESLGWN. A helical membrane pass occupies residues 158–183; sequence LYVSVILLIGMTALLTVTGGLVAVIY. The Cytoplasmic segment spans residues 184-186; the sequence is TDT. A helical transmembrane segment spans residues 187 to 205; sequence LQALLMIIGALTLMIISIM. Over 206 to 303 the chain is Extracellular; it reads EIGGFEEVKR…HAKGSTLMAG (98 aa). N-linked (GlcNAc...) asparagine glycosylation is present at asparagine 232. Residues 304 to 324 traverse the membrane as a helical segment; the sequence is FLKLLPMFIIVVPGMISRILF. Residues 325–353 lie on the Cytoplasmic side of the membrane; sequence TDDIACINPEHCMLVCGSRAGCSNIAYPR. Residues 354–376 traverse the membrane as a helical segment; it reads LVMKLVPVGLRGLMMAVMIAALM. Residues 377–406 are Extracellular-facing; that stretch reads SDLDSIFNSASTIFTLDVYKLIRKSASSRE. A helical membrane pass occupies residues 407–430; sequence LMIVGRIFVAFMVVISIAWVPIIV. Topologically, residues 431–443 are cytoplasmic; the sequence is EMQGGQMYLYIQE. A helical transmembrane segment spans residues 444–462; the sequence is VADYLTPPVAALFLLAIFW. The Extracellular portion of the chain corresponds to 463–510; sequence KRCNEQGAFYGGMAGFVLGAVRLILAFAYRAPECDQPDNRPGFIKDIH. The chain crosses the membrane as a helical span at residues 511–532; sequence YMYVATGLFWVTGLITVIVSLL. Residues 533-695 lie on the Cytoplasmic side of the membrane; that stretch reads TPPPTKEQIR…QMLEETRQVK (163 aa). Phosphoserine is present on residues serine 594 and serine 632. A helical transmembrane segment spans residues 696–716; it reads VILNIGLFAVCSLGIFMFVYF. Residues 717 to 718 lie on the Extracellular side of the membrane; that stretch reads SL.

Belongs to the sodium:solute symporter (SSF) (TC 2.A.21) family. As to quaternary structure, interacts with KCNQ2 (via the pore module). Interacts with KCNQ1; this interaction is direct. Forms coregulatory complexes with ion channels KCNQ2-KCNQ3 and KCNQ1-KCNE2.

Its subcellular location is the apical cell membrane. The protein localises to the basolateral cell membrane. It catalyses the reaction myo-inositol(out) + 2 Na(+)(out) = myo-inositol(in) + 2 Na(+)(in). It carries out the reaction scyllo-inositol(out) + 2 Na(+)(out) = scyllo-inositol(in) + 2 Na(+)(in). Functionally, electrogenic Na(+)-coupled sugar symporter that actively transports myo-inositol and its stereoisomer scyllo-inositol across the plasma membrane, with a Na(+) to sugar coupling ratio of 2:1. Maintains myo-inositol concentration gradient that defines cell volume and fluid balance during osmotic stress, in particular in the fetoplacental unit and central nervous system. Forms coregulatory complexes with voltage-gated K(+) ion channels, allosterically altering ion selectivity, voltage dependence and gating kinetics of the channel. In turn, K(+) efflux through the channel forms a local electrical gradient that modulates electrogenic Na(+)-coupled myo-inositol influx through the transporter. Associates with KCNQ1-KCNE2 channel in the apical membrane of choroid plexus epithelium and regulates the myo-inositol gradient between blood and cerebrospinal fluid with an impact on neuron excitability. Associates with KCNQ2-KCNQ3 channel altering ion selectivity, increasing Na(+) and Cs(+) permeation relative to K(+) permeation. Provides myo-inositol precursor for biosynthesis of phosphoinositides such as PI(4,5)P2, thus indirectly affecting the activity of phosphoinositide-dependent ion channels and Ca(2+) signaling upon osmotic stress. The polypeptide is Sodium/myo-inositol cotransporter (Homo sapiens (Human)).